A 201-amino-acid polypeptide reads, in one-letter code: L(+)-tartrate dehydratase subunit beta (201 aa).

Histidine 37 is a catalytic residue.

It belongs to the class-I fumarase family. In terms of assembly, heterotetramer of two alpha and two beta subunits.

It catalyses the reaction (2R,3R)-tartrate = oxaloacetate + H2O. The sequence is that of L(+)-tartrate dehydratase subunit beta (ttdB) from Shigella boydii serotype 4 (strain Sb227).